A 225-amino-acid polypeptide reads, in one-letter code: Thymidylate kinase (225 aa).

10–17 provides a ligand contact to ATP; that stretch reads GGEGAGKT.

This sequence belongs to the thymidylate kinase family.

It carries out the reaction dTMP + ATP = dTDP + ADP. In terms of biological role, phosphorylation of dTMP to form dTDP in both de novo and salvage pathways of dTTP synthesis. The protein is Thymidylate kinase of Oceanobacillus iheyensis (strain DSM 14371 / CIP 107618 / JCM 11309 / KCTC 3954 / HTE831).